A 479-amino-acid polypeptide reads, in one-letter code: ATP synthase subunit beta (479 aa).

Position 153–160 (153–160 (GGAGVGKT)) interacts with ATP.

It belongs to the ATPase alpha/beta chains family. F-type ATPases have 2 components, CF(1) - the catalytic core - and CF(0) - the membrane proton channel. CF(1) has five subunits: alpha(3), beta(3), gamma(1), delta(1), epsilon(1). CF(0) has three main subunits: a(1), b(2) and c(9-12). The alpha and beta chains form an alternating ring which encloses part of the gamma chain. CF(1) is attached to CF(0) by a central stalk formed by the gamma and epsilon chains, while a peripheral stalk is formed by the delta and b chains.

It is found in the cell membrane. The enzyme catalyses ATP + H2O + 4 H(+)(in) = ADP + phosphate + 5 H(+)(out). Its function is as follows. Produces ATP from ADP in the presence of a proton gradient across the membrane. The catalytic sites are hosted primarily by the beta subunits. The protein is ATP synthase subunit beta of Lactobacillus helveticus (strain DPC 4571).